We begin with the raw amino-acid sequence, 508 residues long: Photosystem II CP47 reaction center protein (508 aa).

A run of 6 helical transmembrane segments spans residues 21–36, 101–115, 140–156, 203–218, 237–252, and 457–472; these read AVHI…WAGS, IVFS…IWHW, GIHL…FGAF, IAAG…FHLS, VLSS…AFVV, and TFAL…HGAR.

It belongs to the PsbB/PsbC family. PsbB subfamily. In terms of assembly, PSII is composed of 1 copy each of membrane proteins PsbA, PsbB, PsbC, PsbD, PsbE, PsbF, PsbH, PsbI, PsbJ, PsbK, PsbL, PsbM, PsbT, PsbX, PsbY, PsbZ, Psb30/Ycf12, at least 3 peripheral proteins of the oxygen-evolving complex and a large number of cofactors. It forms dimeric complexes. Requires Binds multiple chlorophylls. PSII binds additional chlorophylls, carotenoids and specific lipids. as cofactor.

It is found in the plastid. The protein localises to the chloroplast thylakoid membrane. One of the components of the core complex of photosystem II (PSII). It binds chlorophyll and helps catalyze the primary light-induced photochemical processes of PSII. PSII is a light-driven water:plastoquinone oxidoreductase, using light energy to abstract electrons from H(2)O, generating O(2) and a proton gradient subsequently used for ATP formation. This chain is Photosystem II CP47 reaction center protein, found in Secale cereale (Rye).